Reading from the N-terminus, the 323-residue chain is Serine/threonine-protein phosphatase PP1-gamma catalytic subunit (323 aa).

At Ala2 the chain carries N-acetylalanine. Positions 64, 66, 92, and 124 each coordinate Mn(2+). The active-site Proton donor is His125. His173 and His248 together coordinate Mn(2+). A disordered region spans residues Lys302 to Lys323. A phosphothreonine mark is found at Thr307 and Thr311.

This sequence belongs to the PPP phosphatase family. PP-1 subfamily. PP1 comprises a catalytic subunit, PPP1CA, PPP1CB or PPP1CC, which is folded into its native form by inhibitor 2 and glycogen synthetase kinase 3, and then complexed to one or several targeting or regulatory subunits. PPP1R12A, PPP1R12B and PPP1R12C mediate binding to myosin. PPP1R3A (in skeletal muscle), PPP1R3B (in liver), PPP1R3C, PPP1R3D and PPP1R3F (in brain) mediate binding to glycogen. Interacts with cyanobacterial toxin microcystin; disulfide-linked. Interacts with PPP1R3B and PPP1R7. Isoform 2 interacts with SPZ1. Interacts with CDCA2. PPP1R15A and PPP1R15B mediate binding to EIF2S1. Part of a complex containing PPP1R15B, PP1 and NCK1/2. Interacts with IKFZ1; the interaction targets PPP1CC to pericentromeric heterochromatin, dephosphorylates IKAROS, stabilizes it and prevents it from degradation. Interacts with PPP1R42; the interaction is direct. Interacts with NOM1 and PPP1R8. Component of the PTW/PP1 phosphatase complex, composed of PPP1R10/PNUTS, TOX4, WDR82, and PPP1CA or PPP1CB or PPP1CC. Interacts with PPP1R8. Interacts with isoform 1 and isoform 4 NEK2. Interacts with URI1; the interaction is phosphorylation-dependent and occurs in a growth factor-dependent manner. Interacts with FOXP3. Interacts with TMEM225 (via RVxF motif). Interacts with MKI67. Interacts with RRP1B; this targets PPP1CC to the nucleolus. Interacts with PPP1R2B. Found in a complex with PPP1CA, PPP1CC, SHC1 and PEAK1. Interacts with DYNLT4. Interacts (via RVxF motif) with FIRRM; regulates PLK1 kinase activity. Interacts with the KNL1 complex subunit KNL1; the interaction is direct and mutually exclusive with KNL1 binding to microtubules. Component of the SHOC2-MRAS-PP1c (SMP) complex consisting of SHOC2, GTP-bound M-Ras/MRAS and the catalytic subunit of protein phosphatase 1 (either PPP1CA, PPP1CB or PPP1CC). SHOC2 and PP1c preferably bind M-Ras/MRAS, but they also bind K-Ras/KRAS, N-Ras/NRAS and H-Ras/HRAS; these interactions are GTP-dependent and both SHOC2 and PP1c are required to form a stable complex. Interacts with SHOC2 in the absence of Ras GTPases. The cofactor is Mn(2+). Post-translationally, phosphorylated by NEK2.

The protein resides in the cytoplasm. Its subcellular location is the nucleus. The protein localises to the nucleolus. It is found in the nucleoplasm. It localises to the nucleus speckle. The protein resides in the chromosome. Its subcellular location is the centromere. The protein localises to the kinetochore. It is found in the cleavage furrow. It localises to the midbody. The protein resides in the mitochondrion. Its subcellular location is the cytoskeleton. The protein localises to the microtubule organizing center. It carries out the reaction O-phospho-L-seryl-[protein] + H2O = L-seryl-[protein] + phosphate. The catalysed reaction is O-phospho-L-threonyl-[protein] + H2O = L-threonyl-[protein] + phosphate. Its activity is regulated as follows. Inactivated by binding to URI1. The phosphatase activity of the PPP1R15A-PP1 complex toward EIF2S1 is specifically inhibited by Salubrinal, a drug that protects cells from endoplasmic reticulum stress. Protein phosphatase that associates with over 200 regulatory proteins to form highly specific holoenzymes which dephosphorylate hundreds of biological targets. Protein phosphatase 1 (PP1) is essential for cell division, and participates in the regulation of glycogen metabolism, muscle contractility and protein synthesis. Dephosphorylates RPS6KB1. Involved in regulation of ionic conductances and long-term synaptic plasticity. May play an important role in dephosphorylating substrates such as the postsynaptic density-associated Ca(2+)/calmodulin dependent protein kinase II. Component of the PTW/PP1 phosphatase complex, which plays a role in the control of chromatin structure and cell cycle progression during the transition from mitosis into interphase. In balance with CSNK1D and CSNK1E, determines the circadian period length, through the regulation of the speed and rhythmicity of PER1 and PER2 phosphorylation. May dephosphorylate CSNK1D and CSNK1E. Regulates the recruitment of the SKA complex to kinetochores. Dephosphorylates the 'Ser-418' residue of FOXP3 in regulatory T-cells (Treg) from patients with rheumatoid arthritis, thereby inactivating FOXP3 and rendering Treg cells functionally defective. Together with PPP1CA (PP1-alpha subunit), dephosphorylates IFIH1/MDA5 and RIG-I leading to their activation and a functional innate immune response. Core component of the SHOC2-MRAS-PP1c (SMP) holophosphatase complex that regulates the MAPK pathway activation. The SMP complex specifically dephosphorylates the inhibitory phosphorylation at 'Ser-259' of RAF1 kinase, 'Ser-365' of BRAF kinase and 'Ser-214' of ARAF kinase, stimulating their kinase activities. Dephosphorylates MKI67 at the onset of anaphase. The SMP complex enhances the dephosphorylation activity and substrate specificity of PP1c. This is Serine/threonine-protein phosphatase PP1-gamma catalytic subunit (PPP1CC) from Homo sapiens (Human).